A 209-amino-acid polypeptide reads, in one-letter code: Vacuolar protein sorting-associated protein 28 homolog 1 (209 aa).

Residues 1 to 99 enclose the VPS28 N-terminal domain; the sequence is MEVKLWNDKR…TSGVPATVEH (99 aa). Residues 109–205 form the VPS28 C-terminal domain; that stretch reads SSASVVAECV…SYNSFMAALP (97 aa).

It belongs to the VPS28 family. In terms of assembly, component of the endosomal sorting required for transport complex I (ESCRT-I), composed of ELC, VPS28 and VPS37. Interacts with ELC.

It is found in the endosome. Functionally, component of the ESCRT-I complex (endosomal sorting complex required for transport I), a regulator of vesicular trafficking process. Required for the sorting of endocytic ubiquitinated cargos into multivesicular bodies (MVBs). Mediates the association to the ESCRT-0 complex. This Arabidopsis thaliana (Mouse-ear cress) protein is Vacuolar protein sorting-associated protein 28 homolog 1 (VPS28-1).